The chain runs to 146 residues: Hemoglobin A/D subunit beta (146 aa).

One can recognise a Globin domain in the interval 2-146 (HWTSEEKQYI…VAHALALGYH (145 aa)). Heme b-binding residues include H63 and H92.

This sequence belongs to the globin family. In terms of assembly, hemoglobins A and D are heterotetramers of alpha-1, alpha-2 and two identical beta chains. In terms of tissue distribution, red blood cells.

Its function is as follows. Involved in oxygen transport from the lung to the various peripheral tissues. This Aldabrachelys gigantea (Aldabra giant tortoise) protein is Hemoglobin A/D subunit beta.